Consider the following 276-residue polypeptide: Putative aliphatic sulfonates transport permease protein SsuC (276 aa).

7 helical membrane-spanning segments follow: residues 32–52 (GLLL…LGVV), 54–74 (ATVL…ILSG), 87–107 (AALG…LAGF), 119–141 (LQML…FGFD), 146–168 (ILLI…IRGV), 199–219 (ILLG…VAEL), and 242–262 (VFAG…FVRL). The ABC transmembrane type-1 domain occupies 80–260 (LQISIYRAAL…VVGKLTDSFV (181 aa)).

The protein belongs to the binding-protein-dependent transport system permease family. CysTW subfamily.

It localises to the cell membrane. Part of a binding-protein-dependent transport system for aliphatic sulfonates. Probably responsible for the translocation of the substrate across the membrane. This chain is Putative aliphatic sulfonates transport permease protein SsuC (ssuC), found in Bacillus subtilis (strain 168).